We begin with the raw amino-acid sequence, 552 residues long: Putative transport protein Spro_0050 (552 aa).

6 helical membrane-spanning segments follow: residues 4 to 24 (IALT…MGNW), 26 to 46 (IYGV…VGHF), 65 to 85 (FGLI…FFSS), 96 to 116 (FAIL…KLFA), 117 to 137 (VPLP…PALG), and 158 to 178 (MGYA…MWLI). 2 RCK C-terminal domains span residues 192–276 (AFAS…VIGE) and 279–361 (DVSL…IVGN). 6 consecutive transmembrane segments (helical) span residues 371-391 (MLPV…PLFI), 393-413 (GFPA…ALIL), 439-459 (IVLF…DTLI), 464-484 (LAWI…VGVL), 493-513 (YLTL…LAFA), and 530-550 (VYPL…VLFW).

The protein belongs to the AAE transporter (TC 2.A.81) family. YidE subfamily.

It is found in the cell membrane. In Serratia proteamaculans (strain 568), this protein is Putative transport protein Spro_0050.